The sequence spans 396 residues: MNLFPETVATDDKVSQLFKTSNALDKKATPLIKVQKIEVIKKTDKDADGDEKMEDAASDDAKVKKPSKKKLAKKNKETKTPEQVPEEPEKLVEEGKESKKSTKEDEIEKASRTIFVGNLSNEVIISKSTYKLFQKLFNNIDDDDENKKLPIQSIRFRSVSFEDALPRKVAFVQQKLHKSRASVNAYIVYKEQSPLLNKLIKRLNGQVFSNRHLRVDSITHPAPHDKQRSVFVGNLDFEEDEESLWKHFGACGSIEYVRIVRDPKTNMGKGFAYVQFNELQSVSKALLLNEKPMISQNEHLKKRKLRVTRCKNIRKVEPTLKSGKYMTDGQKTKLGRAKKILNKAERSKLLKELTVEGIRATKDDSKPVLKKGKKERSKTGRVTKRSQAFKKSQQKK.

Positions 43-104 (TDKDADGDEK…GKESKKSTKE (62 aa)) are disordered. The segment covering 47–58 (ADGDEKMEDAAS) has biased composition (acidic residues). Residues 64-73 (KKPSKKKLAK) are compositionally biased toward basic residues. Residues 87–104 (EPEKLVEEGKESKKSTKE) are compositionally biased toward basic and acidic residues. RRM domains are found at residues 112–220 (RTIF…SITH) and 228–312 (RSVF…RCKN). The tract at residues 361–396 (TKDDSKPVLKKGKKERSKTGRVTKRSQAFKKSQQKK) is disordered. Positions 368-396 (VLKKGKKERSKTGRVTKRSQAFKKSQQKK) are enriched in basic residues.

Belongs to the RRM RBM34 family.

The protein localises to the nucleus. Its subcellular location is the nucleolus. In terms of biological role, involved in pre-25S rRNA processing. The chain is Nucleolar protein 12 (NOP12) from Candida glabrata (strain ATCC 2001 / BCRC 20586 / JCM 3761 / NBRC 0622 / NRRL Y-65 / CBS 138) (Yeast).